Reading from the N-terminus, the 461-residue chain is Putative dipeptidase CPSG_01350 (461 aa).

Basic and acidic residues predominate over residues 1–10 (MSARDNEKGS). Residues 1 to 31 (MSARDNEKGSARSQPSHAAASEIENVPRPSR) form a disordered region. The helical transmembrane segment at 35–52 (WTGTMIKVFIICACAGIV) threads the bilayer. The Zn(2+) site is built by histidine 90, aspartate 92, and glutamate 203. Cysteine 142 and cysteine 232 are oxidised to a cystine. Histidine 230 is a binding site for substrate. 2 residues coordinate Zn(2+): histidine 274 and histidine 295. Residues arginine 306 and aspartate 366 each contribute to the substrate site. The N-linked (GlcNAc...) asparagine glycan is linked to asparagine 379.

The protein belongs to the metallo-dependent hydrolases superfamily. Peptidase M19 family. It depends on Zn(2+) as a cofactor.

It is found in the membrane. The catalysed reaction is an L-aminoacyl-L-amino acid + H2O = 2 an L-alpha-amino acid. Its function is as follows. Hydrolyzes a wide range of dipeptides. The sequence is that of Putative dipeptidase CPSG_01350 from Coccidioides posadasii (strain RMSCC 757 / Silveira) (Valley fever fungus).